Reading from the N-terminus, the 139-residue chain is D-ribose pyranase (139 aa).

Catalysis depends on histidine 20, which acts as the Proton donor. Substrate-binding positions include aspartate 28, histidine 106, and 128–130 (FAN).

This sequence belongs to the RbsD / FucU family. RbsD subfamily. As to quaternary structure, homodecamer.

The protein localises to the cytoplasm. The enzyme catalyses beta-D-ribopyranose = beta-D-ribofuranose. It functions in the pathway carbohydrate metabolism; D-ribose degradation; D-ribose 5-phosphate from beta-D-ribopyranose: step 1/2. Functionally, catalyzes the interconversion of beta-pyran and beta-furan forms of D-ribose. This chain is D-ribose pyranase, found in Klebsiella pneumoniae (strain 342).